Reading from the N-terminus, the 428-residue chain is UDP-N-acetylglucosamine 1-carboxyvinyltransferase 2 (428 aa).

22–23 (KN) serves as a coordination point for phosphoenolpyruvate. Arg-92 is a binding site for UDP-N-acetyl-alpha-D-glucosamine. The active-site Proton donor is the Cys-116. Residue Cys-116 is modified to 2-(S-cysteinyl)pyruvic acid O-phosphothioketal. UDP-N-acetyl-alpha-D-glucosamine contacts are provided by residues 121–125 (RPIDQ), Asp-304, and Ile-326.

This sequence belongs to the EPSP synthase family. MurA subfamily.

The protein localises to the cytoplasm. It carries out the reaction phosphoenolpyruvate + UDP-N-acetyl-alpha-D-glucosamine = UDP-N-acetyl-3-O-(1-carboxyvinyl)-alpha-D-glucosamine + phosphate. Its pathway is cell wall biogenesis; peptidoglycan biosynthesis. Cell wall formation. Adds enolpyruvyl to UDP-N-acetylglucosamine. The sequence is that of UDP-N-acetylglucosamine 1-carboxyvinyltransferase 2 from Shouchella clausii (strain KSM-K16) (Alkalihalobacillus clausii).